Reading from the N-terminus, the 790-residue chain is N-methylputrescine oxidase 1, peroxisomal (790 aa).

The disordered stretch occupies residues 1-23 (MATTKQKVTAPSPSPSSSTASCC). The segment covering 9 to 23 (TAPSPSPSSSTASCC) has biased composition (low complexity). 423–434 (AFDAGEDGLGKN) is a substrate binding site. The active-site Proton acceptor is aspartate 425. An intrachain disulfide couples cysteine 444 to cysteine 470. 506–511 (VANYEY) lines the substrate pocket. Tyrosine 509 acts as the Schiff-base intermediate with substrate; via topaquinone in catalysis. Tyrosine 509 is modified (2',4',5'-topaquinone). Cu cation is bound by residues histidine 559 and histidine 561. Mn(2+)-binding residues include aspartate 714 and isoleucine 715. Residue histidine 725 coordinates Cu cation.

This sequence belongs to the copper/topaquinone oxidase family. Homodimer. It depends on Cu cation as a cofactor. The cofactor is Zn(2+). Requires L-topaquinone as cofactor. Post-translationally, topaquinone (TPQ) is generated by copper-dependent autoxidation of a specific tyrosyl residue. As to expression, mainly expressed in roots, and, to a lower extent, in stems.

It localises to the peroxisome. The catalysed reaction is a primary methyl amine + O2 + H2O = an aldehyde + H2O2 + NH4(+). The enzyme catalyses N-methylputrescine + O2 + H2O = 4-methylaminobutanal + H2O2 + NH4(+). It functions in the pathway alkaloid biosynthesis; nicotine biosynthesis. Its function is as follows. Involved in the biosynthesis of pyridine alkaloid natural products, leading mainly to the production of anabasine, anatabine, nicotine and nornicotine, effective deterrents against herbivores with antiparasitic and pesticide properties (neurotoxins); nornicotine serves as the precursor in the synthesis of the carcinogen compound N'-nitrosonornicotine (NNN). Amine oxidase which mediates the deamination of N-methylputrescine to produce 4-methylaminobutanal. Oxidizes preferentially N-methylated amines. This is N-methylputrescine oxidase 1, peroxisomal from Nicotiana tabacum (Common tobacco).